Consider the following 206-residue polypeptide: dCTP deaminase, dUMP-forming (206 aa).

DCTP contacts are provided by residues 117-122 (RSSFGR), Asp135, 143-145 (TLE), Gln163, Tyr177, Lys184, and Gln188. Residue Glu145 is the Proton donor/acceptor of the active site.

This sequence belongs to the dCTP deaminase family. As to quaternary structure, homotrimer.

The enzyme catalyses dCTP + 2 H2O = dUMP + NH4(+) + diphosphate. Its pathway is pyrimidine metabolism; dUMP biosynthesis; dUMP from dCTP: step 1/1. Bifunctional enzyme that catalyzes both the deamination of dCTP to dUTP and the hydrolysis of dUTP to dUMP without releasing the toxic dUTP intermediate. The chain is dCTP deaminase, dUMP-forming from Methanococcus maripaludis (strain C5 / ATCC BAA-1333).